Here is a 438-residue protein sequence, read N- to C-terminus: GTPase Der (438 aa).

2 consecutive EngA-type G domains span residues 4–168 and 177–352; these read PIVA…NDPS and IRIA…DNYS. Residues 10–17, 57–61, 120–123, 183–190, 230–234, and 295–298 each bind GTP; these read GRPNVGKS, DTGGI, NKID, GKPNVGKS, DTAGL, and NKWD. A KH-like domain is found at 353 to 437; sequence KRVSTGLLND…GIEIEYRARK (85 aa).

The protein belongs to the TRAFAC class TrmE-Era-EngA-EngB-Septin-like GTPase superfamily. EngA (Der) GTPase family. Associates with the 50S ribosomal subunit.

Its function is as follows. GTPase that plays an essential role in the late steps of ribosome biogenesis. The sequence is that of GTPase Der from Clostridium perfringens (strain ATCC 13124 / DSM 756 / JCM 1290 / NCIMB 6125 / NCTC 8237 / Type A).